Consider the following 438-residue polypeptide: DNA primase DnaG (438 aa).

Residues 169–243 (DSIIVVEGRA…DIDYVARAPY (75 aa)) enclose the Toprim domain. Glu-175, Asp-217, and Asp-219 together coordinate Mg(2+).

It belongs to the archaeal DnaG primase family. Forms a ternary complex with MCM helicase and DNA. It depends on Mg(2+) as a cofactor.

The enzyme catalyses ssDNA + n NTP = ssDNA/pppN(pN)n-1 hybrid + (n-1) diphosphate.. Functionally, RNA polymerase that catalyzes the synthesis of short RNA molecules used as primers for DNA polymerase during DNA replication. In Methanococcus maripaludis (strain C5 / ATCC BAA-1333), this protein is DNA primase DnaG.